The chain runs to 352 residues: Maleylacetate reductase (352 aa).

NAD(+)-binding positions include 93–94 and 115–119; these read GS and TTYAG.

This sequence belongs to the iron-containing alcohol dehydrogenase family. The cofactor is The maleylacetate reductase family of enzymes does not require any metal ion for activity, despite being related to the family III metal-dependent polyol dehydrogenases..

The catalysed reaction is 3-oxoadipate + NAD(+) = maleylacetate + NADH + H(+). Its pathway is xenobiotic degradation; gamma-hexachlorocyclohexane degradation. In terms of biological role, catalyzes the NADH-dependent reduction of maleylacetate to beta-ketoadipate, a step in the degradation of gamma-hexachlorocyclohexane (gamma-HCH or lindane). Has an essential role in this assimilation pathway that allows S.japonicum UT26 to grow on gamma-HCH as the sole source of carbon and energy. The chain is Maleylacetate reductase from Sphingobium indicum (strain DSM 16413 / CCM 7287 / MTCC 6362 / UT26 / NBRC 101211 / UT26S) (Sphingobium japonicum).